We begin with the raw amino-acid sequence, 336 residues long: Inositol 2-dehydrogenase (336 aa).

The protein belongs to the Gfo/Idh/MocA family. Homotetramer.

It catalyses the reaction myo-inositol + NAD(+) = scyllo-inosose + NADH + H(+). Involved in the oxidation of myo-inositol (MI) to 2-keto-myo-inositol (2KMI or 2-inosose). The protein is Inositol 2-dehydrogenase of Pseudomonas savastanoi pv. phaseolicola (strain 1448A / Race 6) (Pseudomonas syringae pv. phaseolicola (strain 1448A / Race 6)).